The chain runs to 260 residues: Indole-3-glycerol phosphate synthase (260 aa).

This sequence belongs to the TrpC family.

The catalysed reaction is 1-(2-carboxyphenylamino)-1-deoxy-D-ribulose 5-phosphate + H(+) = (1S,2R)-1-C-(indol-3-yl)glycerol 3-phosphate + CO2 + H2O. It participates in amino-acid biosynthesis; L-tryptophan biosynthesis; L-tryptophan from chorismate: step 4/5. The chain is Indole-3-glycerol phosphate synthase from Lacticaseibacillus paracasei (strain ATCC 334 / BCRC 17002 / CCUG 31169 / CIP 107868 / KCTC 3260 / NRRL B-441) (Lactobacillus paracasei).